A 956-amino-acid chain; its full sequence is Pyruvate, phosphate dikinase, chloroplastic (956 aa).

The N-terminal 79 residues, 1 to 79 (MMSSLFVEGM…AVLNPVSPPV (79 aa)), are a transit peptide targeting the chloroplast. Residue Thr-536 is modified to Phosphothreonine; by PDRP1. His-538 functions as the Tele-phosphohistidine intermediate in the catalytic mechanism. Substrate is bound by residues Arg-644, Arg-701, Glu-830, Gly-851, Thr-852, Asn-853, and Asp-854. Glu-830 is a binding site for Mg(2+). Asp-854 contacts Mg(2+). Cys-916 (proton donor) is an active-site residue.

This sequence belongs to the PEP-utilizing enzyme family. As to quaternary structure, homotetramer. Mg(2+) is required as a cofactor. In terms of processing, phosphorylation of Thr-536 in the dark inactivates the enzyme. Dephosphorylation upon light stimulation reactivates the enzyme.

It is found in the plastid. The protein resides in the chloroplast. It catalyses the reaction pyruvate + phosphate + ATP = phosphoenolpyruvate + AMP + diphosphate + H(+). With respect to regulation, activated by light-induced dephosphorylation. Inhibited by dark-induced phosphorylation. Both reactions are catalyzed by PDRP1. Formation of phosphoenolpyruvate. The chain is Pyruvate, phosphate dikinase, chloroplastic (PPDK) from Flaveria pringlei.